The chain runs to 540 residues: Putative rhamnogalacturonase (540 aa).

A signal peptide spans 1–23; sequence MGFLTLFHMAFLAVSLFVSGALA. 2 disulfide bridges follow: Cys-53–Cys-100 and Cys-192–Cys-203. Asn-89 carries an N-linked (GlcNAc...) asparagine glycan. N-linked (GlcNAc...) asparagine glycosylation occurs at Asn-368.

It belongs to the polysaccharide lyase 4 family.

The protein resides in the secreted. It carries out the reaction Endotype eliminative cleavage of L-alpha-rhamnopyranosyl-(1-&gt;4)-alpha-D-galactopyranosyluronic acid bonds of rhamnogalacturonan I domains in ramified hairy regions of pectin leaving L-rhamnopyranose at the reducing end and 4-deoxy-4,5-unsaturated D-galactopyranosyluronic acid at the non-reducing end.. Functionally, could be a pectinolytic enzyme that hydrolyzes the alpha-L-rhamnopyranosyl-(1,4)-alpha-D-galacturonopyranosyl glycosidic linkage by beta-elimination, thereby generating oligosaccharides terminating at the non-reducing end with a hex-4-enopyranosyluronic acid residue. This is Putative rhamnogalacturonase (asd-1) from Neurospora crassa (strain ATCC 24698 / 74-OR23-1A / CBS 708.71 / DSM 1257 / FGSC 987).